A 237-amino-acid chain; its full sequence is Putative biotin ligase (237 aa).

Residues 1 to 191 (MEIIHLSEID…KKYKKYSITI (191 aa)) form the BPL/LPL catalytic domain.

This sequence belongs to the biotin--protein ligase family.

It catalyses the reaction biotin + L-lysyl-[protein] + ATP = N(6)-biotinyl-L-lysyl-[protein] + AMP + diphosphate + H(+). The protein is Putative biotin ligase of Methanocaldococcus jannaschii (strain ATCC 43067 / DSM 2661 / JAL-1 / JCM 10045 / NBRC 100440) (Methanococcus jannaschii).